The chain runs to 541 residues: Glutamyl-tRNA(Gln) amidotransferase subunit B, mitochondrial (541 aa).

Belongs to the GatB/GatE family. GatB subfamily. As to quaternary structure, subunit of the heterotrimeric GatFAB amidotransferase (AdT) complex, composed of A (HER2), B (PET112) and F (YGR102C) subunits.

It localises to the mitochondrion. It carries out the reaction L-glutamyl-tRNA(Gln) + L-glutamine + ATP + H2O = L-glutaminyl-tRNA(Gln) + L-glutamate + ADP + phosphate + H(+). Allows the formation of correctly charged Gln-tRNA(Gln) through the transamidation of misacylated Glu-tRNA(Gln) in the mitochondria. The reaction takes place in the presence of glutamine and ATP through an activated gamma-phospho-Glu-tRNA(Gln). This Saccharomyces cerevisiae (strain ATCC 204508 / S288c) (Baker's yeast) protein is Glutamyl-tRNA(Gln) amidotransferase subunit B, mitochondrial.